The primary structure comprises 566 residues: Beta,beta-carotene 15,15'-dioxygenase (566 aa).

Residues His-172, His-237, His-308, and His-514 each coordinate Fe cation. The interval 529-566 (TPAKTQEDENSDHPTGLTAPGLGHGENDFTAGHGGKSL) is disordered.

This sequence belongs to the carotenoid oxygenase family. It depends on Fe(2+) as a cofactor.

The protein localises to the cytoplasm. The protein resides in the cytosol. It carries out the reaction all-trans-beta-carotene + O2 = 2 all-trans-retinal. Its pathway is cofactor metabolism; retinol metabolism. In terms of biological role, symmetrically cleaves beta-carotene into two molecules of retinal using a dioxygenase mechanism. The sequence is that of Beta,beta-carotene 15,15'-dioxygenase from Rattus norvegicus (Rat).